The chain runs to 648 residues: Threonine--tRNA ligase (648 aa).

The TGS domain maps to Met1 to Thr63. The catalytic stretch occupies residues Asp247–Pro544. Cys344, His395, and His521 together coordinate Zn(2+).

Belongs to the class-II aminoacyl-tRNA synthetase family. Homodimer. It depends on Zn(2+) as a cofactor.

The protein resides in the cytoplasm. The catalysed reaction is tRNA(Thr) + L-threonine + ATP = L-threonyl-tRNA(Thr) + AMP + diphosphate + H(+). Its function is as follows. Catalyzes the attachment of threonine to tRNA(Thr) in a two-step reaction: L-threonine is first activated by ATP to form Thr-AMP and then transferred to the acceptor end of tRNA(Thr). Also edits incorrectly charged L-seryl-tRNA(Thr). This chain is Threonine--tRNA ligase, found in Paracoccus denitrificans (strain Pd 1222).